A 244-amino-acid polypeptide reads, in one-letter code: MILYPAIDLKDGECVRLKLGEMSEATVYNRDPAAQAKAFEEQGFEWLHVVDLNGAFAGASVNGAAVEAILKATRNPVQLGGGIRSLEQIEAWLERGLARVILGTVAVRDPALVREACGKFPGKIAVGIDARGGKVAVEGWAETSDLTAAELAKRFEGAGVAAIIYTDIDRDGVLTGINWEATIALADAVSIPIIASGGLASMADIERMVKPDAAKLEGAISGRALYDGRIDPKEALAMLRKARA.

Residue D8 is the Proton acceptor of the active site. The active-site Proton donor is the D129.

This sequence belongs to the HisA/HisF family.

The protein localises to the cytoplasm. It catalyses the reaction 1-(5-phospho-beta-D-ribosyl)-5-[(5-phospho-beta-D-ribosylamino)methylideneamino]imidazole-4-carboxamide = 5-[(5-phospho-1-deoxy-D-ribulos-1-ylimino)methylamino]-1-(5-phospho-beta-D-ribosyl)imidazole-4-carboxamide. The protein operates within amino-acid biosynthesis; L-histidine biosynthesis; L-histidine from 5-phospho-alpha-D-ribose 1-diphosphate: step 4/9. The chain is 1-(5-phosphoribosyl)-5-[(5-phosphoribosylamino)methylideneamino] imidazole-4-carboxamide isomerase from Chelativorans sp. (strain BNC1).